Consider the following 102-residue polypeptide: Small ribosomal subunit protein uS10 (102 aa).

Belongs to the universal ribosomal protein uS10 family. In terms of assembly, part of the 30S ribosomal subunit.

In terms of biological role, involved in the binding of tRNA to the ribosomes. The chain is Small ribosomal subunit protein uS10 from Bartonella henselae (strain ATCC 49882 / DSM 28221 / CCUG 30454 / Houston 1) (Rochalimaea henselae).